The following is a 167-amino-acid chain: NADH-quinone oxidoreductase subunit B (167 aa).

[4Fe-4S] cluster-binding residues include cysteine 40, cysteine 41, cysteine 105, and cysteine 134.

This sequence belongs to the complex I 20 kDa subunit family. As to quaternary structure, NDH-1 is composed of 14 different subunits. Subunits NuoB, C, D, E, F, and G constitute the peripheral sector of the complex. Requires [4Fe-4S] cluster as cofactor.

Its subcellular location is the cell inner membrane. It carries out the reaction a quinone + NADH + 5 H(+)(in) = a quinol + NAD(+) + 4 H(+)(out). NDH-1 shuttles electrons from NADH, via FMN and iron-sulfur (Fe-S) centers, to quinones in the respiratory chain. The immediate electron acceptor for the enzyme in this species is believed to be ubiquinone. Couples the redox reaction to proton translocation (for every two electrons transferred, four hydrogen ions are translocated across the cytoplasmic membrane), and thus conserves the redox energy in a proton gradient. The sequence is that of NADH-quinone oxidoreductase subunit B from Campylobacter jejuni subsp. jejuni serotype O:2 (strain ATCC 700819 / NCTC 11168).